Reading from the N-terminus, the 802-residue chain is LPS-assembly protein LptD (802 aa).

Residues 1–29 form the signal peptide; that stretch reads MARLFSLKPLVLALGFCFGTHCAAADAVA.

This sequence belongs to the LptD family. In terms of assembly, component of the lipopolysaccharide transport and assembly complex. Interacts with LptE and LptA.

The protein resides in the cell outer membrane. Together with LptE, is involved in the assembly of lipopolysaccharide (LPS) at the surface of the outer membrane. This chain is LPS-assembly protein LptD, found in Neisseria meningitidis serogroup A / serotype 4A (strain DSM 15465 / Z2491).